The sequence spans 306 residues: Protoheme IX farnesyltransferase (306 aa).

Transmembrane regions (helical) follow at residues 32–52 (VVALLVLTALVGMSLSVPGAL), 58–78 (IPAMLGIGLLSSAAAAINHIV), 103–123 (NAIVFATSIALLGFIILYALV), 126–146 (LTAFLTLAGLVGYSFVYTMYL), 153–173 (NITIGGLAGAIPPLLGWTAMT), 180–200 (ALLLVLIIFTWTPPHFWALAI), 227–247 (ILLYTVLLFVVCLLPYLVGMS), 249–269 (WLYLIGACSLNLIFFGYAWQL), and 278–298 (AMATFKFSIIHLMLLFIILLL).

This sequence belongs to the UbiA prenyltransferase family. Protoheme IX farnesyltransferase subfamily.

It is found in the cell inner membrane. The enzyme catalyses heme b + (2E,6E)-farnesyl diphosphate + H2O = Fe(II)-heme o + diphosphate. The protein operates within porphyrin-containing compound metabolism; heme O biosynthesis; heme O from protoheme: step 1/1. Converts heme B (protoheme IX) to heme O by substitution of the vinyl group on carbon 2 of heme B porphyrin ring with a hydroxyethyl farnesyl side group. The chain is Protoheme IX farnesyltransferase from Colwellia psychrerythraea (strain 34H / ATCC BAA-681) (Vibrio psychroerythus).